Consider the following 631-residue polypeptide: Fusexin 1 (631 aa).

The first 19 residues, 1 to 19 (MRRAALILAFVLFIGLSSA), serve as a signal peptide directing secretion. Positions 20-90 (TVTSADSITY…THQDSKLKYS (71 aa)) are domain I N-terminus. Residues 20–537 (TVTSADSITY…NLFGGSGSGD (518 aa)) lie on the Extracellular side of the membrane. A domain II N-terminus region spans residues 91–170 (TSTSDELRDI…KLATPAYIDN (80 aa)). The Ca(2+) site is built by Asp-112, Ser-146, Tyr-149, and Asp-150. Cysteines 125 and 155 form a disulfide. Residues 143 to 148 (SVTSPV) are fusion loop, required for fusogenic activity, not required for membrane surface localization. Residues 171-224 (PDEIFTAKAELQAGDKTIQSATLSNGDAGDGTVTDLGDSKISWNGNLDLGASEP) form a domain I central section region. The domain II C-terminus stretch occupies residues 225–316 (ENSRVIALYS…KDSSLDTGSF (92 aa)). The segment at 317–348 (VYDTPELLSYPSFTVYVDAGENGYIEVTKPTG) is domain I C-terminus. Residues 349–455 (DPDIISTSST…SVSVTGIQQS (107 aa)) form a domain III region. 3 disulfide bridges follow: Cys-389–Cys-432, Cys-457–Cys-477, and Cys-490–Cys-506. The disordered stretch occupies residues 443–467 (DSTSVSVTGIQQSECNPGDQRREKN). Positions 456-509 (ECNPGDQRREKNENDRWEIYTCQDNGLTYEYDVTCAEDEKAVAQGDNQFSCEKQ) are domain IV, required for fusogenic activity. The stem stretch occupies residues 510–537 (DDDSGGGDNTGSDSGLFSNLFGGSGSGD). Residues 538 to 558 (LLTQVHTALSILAGLVAGFFG) form a helical membrane-spanning segment. The Cytoplasmic portion of the chain corresponds to 559-590 (YRGARWIHGETDIKGGFKLESRNVSRVKRGSP). A helical transmembrane segment spans residues 591 to 611 (VAGIVGAVLGFVVGYGVASVF). A topological domain (extracellular) is located at residue His-612. Residues 613-630 (PVVQIIVVLGIAVGLYYF) form a helical membrane-spanning segment. A topological domain (cytoplasmic) is located at residue Arg-631.

This sequence belongs to the HAP2/GCS1 family. Fusexin 1 subfamily. Monomer in solution, crystallizes as a trimer in high salt (2.5 M NaCl, 0.2 M CaCl(2)). The trimer is stabilized by interdomain contacts and numerous Ca(2+) and Na(+) ions.

It is found in the cell surface. It localises to the cell membrane. Functionally, exhibits fusogenic activity. Mediates cell-cell fusion in mammalian cells when present in both cells (bilateral fusion). The chain is Fusexin 1 from Uncultured archaeon.